The sequence spans 302 residues: Pentatricopeptide repeat-containing protein At4g38150 (302 aa).

Positions S26 to D40 are enriched in polar residues. 2 disordered regions span residues S26–S82 and V94–E116. Residues L54–P67 show a composition bias toward basic and acidic residues. PPR repeat units lie at residues L130–P164, E165–P199, N200–P234, and N235–V269.

The protein belongs to the PPR family. P subfamily.

The polypeptide is Pentatricopeptide repeat-containing protein At4g38150 (Arabidopsis thaliana (Mouse-ear cress)).